The sequence spans 325 residues: Lipid droplet-associated hydrolase (325 aa).

Serine 139 serves as the catalytic Nucleophile. Active-site charge relay system residues include aspartate 271 and histidine 300.

Belongs to the AB hydrolase superfamily. LDAH family. Present in macrophage-rich areas in atherosclerotic lesions (at protein level). Expressed in monocytes and monocyte-derived macrophages (at protein level).

It is found in the lipid droplet. Its subcellular location is the endoplasmic reticulum. The catalysed reaction is a cholesterol ester + H2O = cholesterol + a fatty acid + H(+). Probable serine lipid hydrolase associated with lipid droplets. Has low cholesterol esterase activity. Appears to lack triglyceride lipase activity. Involved in cholesterol and triglyceride homeostasis; has opposing effects, stimulating cellular triglyceride accumulation and cellular cholesterol release. Acts antagonistically with PNPLA2/ATGL in regulation of cellular lipid stores. May regulate triglyceride accumulation indirectly through stimulation of PNPLA2/ATGL ubiquitination and proteasomal degradation. Promotes microtubule-dependent lipid droplet fusion. Highly expressed in macrophage-rich areas in atherosclerotic lesions, suggesting that it could promote cholesterol ester turnover in macrophages. In Homo sapiens (Human), this protein is Lipid droplet-associated hydrolase.